The following is a 391-amino-acid chain: Tryptophan synthase beta chain (391 aa).

An N6-(pyridoxal phosphate)lysine modification is found at Lys-84.

It belongs to the TrpB family. In terms of assembly, tetramer of two alpha and two beta chains. Pyridoxal 5'-phosphate serves as cofactor.

It carries out the reaction (1S,2R)-1-C-(indol-3-yl)glycerol 3-phosphate + L-serine = D-glyceraldehyde 3-phosphate + L-tryptophan + H2O. It participates in amino-acid biosynthesis; L-tryptophan biosynthesis; L-tryptophan from chorismate: step 5/5. The beta subunit is responsible for the synthesis of L-tryptophan from indole and L-serine. This Caldanaerobacter subterraneus subsp. tengcongensis (strain DSM 15242 / JCM 11007 / NBRC 100824 / MB4) (Thermoanaerobacter tengcongensis) protein is Tryptophan synthase beta chain.